The sequence spans 422 residues: MIARISKSDVWGSVDAPPSKSYTHRAIAIGSMGHYAKITGPLLSADTLATVSACRAFGADIRISGDTVEIAGVIGKPRVPEDVIDAKNSGTTLRLCSSIAALAEGATVFTGDSSLRKRPNGPLIKALNDLGAVCYSTRGTGTAPLIIHGVMKGGRISINGSISSQFISSLLISCPFAKNDTTILIEGELKSKPYVEVTLEMLEKAGCRIETNFEEFRIQCCQDYNLGEYRVPGDFSSASYPLAAAAVTGSRVTVGNLFPSKQGDAAILEHLLDMGANVFWDEEMGTVTVEGGRLHGIDIDAGQTPDLVPTLAVLAACAEGTTHINNAEHVRYKETDRLRAMATELRKMGVQIEERQDGLDIEGGRLTGATVDGHDDHRIVMALAVAGLAADGQTTISTAESVDISYPAFFADLGKLGAKVEV.

Positions 20, 21, and 25 each coordinate 3-phosphoshikimate. K20 contacts phosphoenolpyruvate. Phosphoenolpyruvate is bound by residues G90 and R118. The 3-phosphoshikimate site is built by S163, S164, Q165, S191, D306, and K333. A phosphoenolpyruvate-binding site is contributed by Q165. Residue D306 is the Proton acceptor of the active site. Residues R337 and R378 each coordinate phosphoenolpyruvate.

Belongs to the EPSP synthase family. In terms of assembly, monomer.

Its subcellular location is the cytoplasm. It catalyses the reaction 3-phosphoshikimate + phosphoenolpyruvate = 5-O-(1-carboxyvinyl)-3-phosphoshikimate + phosphate. Its pathway is metabolic intermediate biosynthesis; chorismate biosynthesis. In terms of biological role, catalyzes the transfer of the enolpyruvyl moiety of phosphoenolpyruvate (PEP) to the 5-hydroxyl of shikimate-3-phosphate (S3P) to produce enolpyruvyl shikimate-3-phosphate and inorganic phosphate. In Methanocella arvoryzae (strain DSM 22066 / NBRC 105507 / MRE50), this protein is 3-phosphoshikimate 1-carboxyvinyltransferase.